Here is a 100-residue protein sequence, read N- to C-terminus: Urease subunit gamma (100 aa).

The protein belongs to the urease gamma subunit family. As to quaternary structure, heterotrimer of UreA (gamma), UreB (beta) and UreC (alpha) subunits. Three heterotrimers associate to form the active enzyme.

The protein resides in the cytoplasm. It catalyses the reaction urea + 2 H2O + H(+) = hydrogencarbonate + 2 NH4(+). The protein operates within nitrogen metabolism; urea degradation; CO(2) and NH(3) from urea (urease route): step 1/1. The chain is Urease subunit gamma from Nostoc sp. (strain PCC 7120 / SAG 25.82 / UTEX 2576).